The following is a 498-amino-acid chain: MMVLQQQQQQRLWDATTTSNTNTQTQQSANVESTPTKVCHQENAATHTFMRHMSNSPTPPSPLRSLSDCGKSFEEEELELGENCEMPQNLSSKRQARELDSELENEVLDLAPPPKRLAEEQEEEKVASVNPPQPVAFAPEEMHQALQLQLHSYIEMVRQLAPEAFPNPNLATQFLLQNSLQALAQFQALQQMKQQQREDPLPSYSTPLAKSPLRSPSLSPVPRHSKSQQRTPPNSMTANSLGMSSAVMTPNTPSMQQQPQLQQSTPKPTSGLTVASAMAKLEQSPEETTDLEELEQFAKTFKQRRIKLGFTQGDVGLAMGKLYGNDFSQTTISRFEALNLSFKNMCKLKPLLQKWLEDADSTVAKSGGGVFNINTMTSTLSSTPESILGRRRKKRTSIETTVRTTLEKAFLMNCKPTSEEISQLSERLNMDKEVIRVWFCNRRQKEKRINPSLDLDSPTGTPLSSHAFGYPPQALNMSHMQMEGGSGSFCGSSISSGE.

Over residues 1-30 the composition is skewed to low complexity; it reads MMVLQQQQQQRLWDATTTSNTNTQTQQSAN. The tract at residues 1-35 is disordered; that stretch reads MMVLQQQQQQRLWDATTTSNTNTQTQQSANVESTP. A phosphoserine mark is found at Ser72, Ser211, Ser215, Ser217, and Ser219. Residues 191–273 are disordered; sequence QMKQQQREDP…STPKPTSGLT (83 aa). Residues 207 to 222 show a composition bias toward low complexity; that stretch reads PLAKSPLRSPSLSPVP. The segment covering 228 to 251 has biased composition (polar residues); the sequence is QQRTPPNSMTANSLGMSSAVMTPN. A compositionally biased stretch (low complexity) spans 252–270; that stretch reads TPSMQQQPQLQQSTPKPTS. The 75-residue stretch at 286-360 folds into the POU-specific domain; that stretch reads EETTDLEELE…LLQKWLEDAD (75 aa). Residues 391 to 450 constitute a DNA-binding region (homeobox); sequence RRKKRTSIETTVRTTLEKAFLMNCKPTSEEISQLSERLNMDKEVIRVWFCNRRQKEKRIN.

This sequence belongs to the POU transcription factor family. Class-2 subfamily. In terms of tissue distribution, initial expression in cellular blastoderm stage, then in ectodermal stripes during germband extension. Broad expression in the neuroectoderm followed by limitation to discrete subsets of CNS cells, and expression in specific PNS neurons and support cells.

Its subcellular location is the nucleus. DNA-binding regulatory protein implicated in early development. Involved in neuronal cell fate decision. May act as an octamer-dependent activator of transcription. Could also play an early role in specific ectodermal cells, and a subsequent role in the embryonic nervous system. The protein is POU domain protein 2, isoform A (pdm2) of Drosophila melanogaster (Fruit fly).